The following is a 296-amino-acid chain: NADH-cytochrome b5 reductase 2 (296 aa).

The helical transmembrane segment at 2–24 threads the bilayer; the sequence is LVALAAIGVTVLLFLIKALGSGA. One can recognise an FAD-binding FR-type domain in the interval 35-147; sequence NAKYPLPLIE…RGPNGLLVYK (113 aa). FAD-binding positions include 127–142 and 166–201; these read DSLK…GPNG and VAKH…KCYL.

The protein belongs to the flavoprotein pyridine nucleotide cytochrome reductase family. Requires FAD as cofactor.

Its subcellular location is the membrane. The enzyme catalyses 2 Fe(III)-[cytochrome b5] + NADH = 2 Fe(II)-[cytochrome b5] + NAD(+) + H(+). In terms of biological role, NADH-cytochrome b5 reductases are involved in desaturation and elongation of fatty acids, cholesterol biosynthesis and drug metabolism. The sequence is that of NADH-cytochrome b5 reductase 2 (cyb5r2) from Xenopus laevis (African clawed frog).